The following is a 683-amino-acid chain: 1,4-alpha-glucan-branching enzyme (683 aa).

Residues tryptophan 92 and lysine 127 each coordinate (1,4-alpha-D-glucosyl)n. Aspartate 342 acts as the Nucleophile in catalysis. Glutamate 397 functions as the Proton donor in the catalytic mechanism.

Belongs to the glycosyl hydrolase 13 family. GlgB subfamily.

The protein resides in the cytoplasm. It catalyses the reaction Transfers a segment of a (1-&gt;4)-alpha-D-glucan chain to a primary hydroxy group in a similar glucan chain.. It participates in glycan biosynthesis; glycogen biosynthesis. In terms of biological role, glycogen-branching enzyme participates in the glycogen biosynthetic process along with glycogenin and glycogen synthase. Generates alpha-1,6-glucosidic branches from alpha-1,4-linked glucose chains, to increase solubility of the glycogen polymer. This is 1,4-alpha-glucan-branching enzyme (GLC3) from Rhizophagus irregularis (strain DAOM 181602 / DAOM 197198 / MUCL 43194) (Arbuscular mycorrhizal fungus).